Here is a 750-residue protein sequence, read N- to C-terminus: Polyribonucleotide nucleotidyltransferase (750 aa).

Positions 523 and 529 each coordinate Mg(2+). The KH domain maps to 589–648; that stretch reads PRVTSISIPVDKIGEVIGPKGKMINSITEETGAEITIEDDGTIYVGAADGPSAEAAIDKI. The region spanning 660–729 is the S1 motif domain; the sequence is GERFLGTVVK…SRGKISLVVV (70 aa).

Belongs to the polyribonucleotide nucleotidyltransferase family. The cofactor is Mg(2+).

The protein resides in the cytoplasm. The catalysed reaction is RNA(n+1) + phosphate = RNA(n) + a ribonucleoside 5'-diphosphate. Functionally, involved in mRNA degradation. Catalyzes the phosphorolysis of single-stranded polyribonucleotides processively in the 3'- to 5'-direction. The chain is Polyribonucleotide nucleotidyltransferase from Saccharopolyspora erythraea (strain ATCC 11635 / DSM 40517 / JCM 4748 / NBRC 13426 / NCIMB 8594 / NRRL 2338).